The following is a 148-amino-acid chain: uncharacterized protein (148 aa).

3 helical membrane passes run 25–45 (FCTVGVGNTLIDFGVFFLLTA), 85–105 (IVRFLMINIAASGITFLLLYL), and 118–138 (LAATIGGMMMNFIGNRIWVFG).

The protein belongs to the GtrA family.

The protein resides in the cell membrane. This is an uncharacterized protein from Bacillus subtilis (strain 168).